A 509-amino-acid chain; its full sequence is Glycerol kinase (509 aa).

Residue Thr17 coordinates ADP. Positions 17, 18, and 19 each coordinate ATP. A sn-glycerol 3-phosphate-binding site is contributed by Thr17. Arg21 is a binding site for ADP. The sn-glycerol 3-phosphate site is built by Arg87, Glu88, Tyr139, and Asp256. Glycerol-binding residues include Arg87, Glu88, Tyr139, Asp256, and Gln257. ADP contacts are provided by Thr278 and Gly322. Residues Thr278, Gly322, Gln326, and Ala423 each coordinate ATP. 2 residues coordinate ADP: Ala423 and Asn427.

The protein belongs to the FGGY kinase family.

It carries out the reaction glycerol + ATP = sn-glycerol 3-phosphate + ADP + H(+). The protein operates within polyol metabolism; glycerol degradation via glycerol kinase pathway; sn-glycerol 3-phosphate from glycerol: step 1/1. With respect to regulation, inhibited by fructose 1,6-bisphosphate (FBP). Functionally, key enzyme in the regulation of glycerol uptake and metabolism. Catalyzes the phosphorylation of glycerol to yield sn-glycerol 3-phosphate. This Corynebacterium glutamicum (strain R) protein is Glycerol kinase.